The primary structure comprises 461 residues: Thyroid hormone receptor beta (461 aa).

The segment at 1-24 (MTPNSMTENGLPAWDKQKPRPDRG) is disordered. Positions 1–106 (MTPNSMTENG…IPSYLDKDEL (106 aa)) are modulating. A compositionally biased stretch (basic and acidic residues) spans 15 to 24 (DKQKPRPDRG). Zn(2+) is bound by residues cysteine 107, cysteine 110, cysteine 124, cysteine 127, cysteine 145, cysteine 151, cysteine 161, and cysteine 164. NR C4-type zinc fingers lie at residues 107 to 127 (CVVC…CEGC) and 145 to 169 (CKYE…FKKC). Residues 107 to 181 (CVVCGDKATG…VGMATDLVLD (75 aa)) constitute a DNA-binding region (nuclear receptor). The region spanning 217 to 461 (EEWELIKTVT…PPLFLEVFED (245 aa)) is the NR LBD domain. The segment at 244-461 (KFLPEDIGQA…PPLFLEVFED (218 aa)) is interaction with NR2F6. The 3,3',5-triiodo-L-thyronine site is built by arginine 282, asparagine 331, and histidine 435. L-thyroxine is bound by residues arginine 282, asparagine 331, and histidine 435.

The protein belongs to the nuclear hormone receptor family. NR1 subfamily. In terms of assembly, binds DNA as a dimer; homodimer and heterodimer with RXRB. Interacts with the coactivators NCOA1/SRC1, NCOA2/GRIP1, NCOA7 and MED1/TRAP220 in a ligand-inducible manner. Interacts with the corepressor NCOR1 in absence of ligand. Interacts with C1D. Interacts with NR2F6; the interaction impairs the binding of the THRB homodimer and THRB:RXRB heterodimer to T3 response elements. Interacts with PRMT2 and THRSP. Interacts with TACC1; this interaction is decreased in the presence of thyroid hormone T3.

It localises to the nucleus. Functionally, nuclear hormone receptor that can act as a repressor or activator of transcription. High affinity receptor for thyroid hormones, including triiodothyronine and thyroxine. The sequence is that of Thyroid hormone receptor beta (Thrb) from Mus musculus (Mouse).